Here is a 357-residue protein sequence, read N- to C-terminus: Peptide chain release factor 1 (357 aa).

An N5-methylglutamine modification is found at Gln-235. Over residues 282–294 (RQKADTERSESRR) the composition is skewed to basic and acidic residues. The interval 282–308 (RQKADTERSESRRSQVGSGDRSERIRT) is disordered.

The protein belongs to the prokaryotic/mitochondrial release factor family. Post-translationally, methylated by PrmC. Methylation increases the termination efficiency of RF1.

It localises to the cytoplasm. In terms of biological role, peptide chain release factor 1 directs the termination of translation in response to the peptide chain termination codons UAG and UAA. This chain is Peptide chain release factor 1, found in Brucella anthropi (strain ATCC 49188 / DSM 6882 / CCUG 24695 / JCM 21032 / LMG 3331 / NBRC 15819 / NCTC 12168 / Alc 37) (Ochrobactrum anthropi).